The sequence spans 137 residues: MLKEFKEFALKGNMIDLAIGVIIGGAFGGLVNSIVNDIFMPIIGLITGGIDFSNMFIQLAGEKQATLSAAKAAGATISYGNFITLLINFLIIAWVLFLFVKSMNKIRRKQEEEETSKKMSLEQQLLSEIRDLLAKKK.

3 helical membrane passes run 15 to 35 (IDLAIGVIIGGAFGGLVNSIV), 38 to 58 (IFMPIIGLITGGIDFSNMFIQ), and 80 to 100 (GNFITLLINFLIIAWVLFLFV).

It belongs to the MscL family. As to quaternary structure, homopentamer.

It is found in the cell inner membrane. Functionally, channel that opens in response to stretch forces in the membrane lipid bilayer. May participate in the regulation of osmotic pressure changes within the cell. In Bartonella henselae (strain ATCC 49882 / DSM 28221 / CCUG 30454 / Houston 1) (Rochalimaea henselae), this protein is Large-conductance mechanosensitive channel.